The primary structure comprises 509 residues: Apurinic-apyrimidinic endonuclease 1 (509 aa).

The signal sequence occupies residues 1–24; that stretch reads MPRHCCCFVFHFLLYMLLINIVKN. The disordered stretch occupies residues 144–188; it reads EEKDEECDEKTKQDNNKENIKNETIVQKKKIDKNNKTKEKIKTKS. Basic and acidic residues-rich tracts occupy residues 152 to 164 and 175 to 188; these read EKTK…ENIK and DKNN…KTKS. 9 residues coordinate Zn(2+): His-291, His-331, Glu-367, Asp-401, His-404, His-438, Asp-451, His-453, and Glu-483. His-404 contacts Mn(2+). Asp-451 and His-453 together coordinate Mn(2+).

This sequence belongs to the AP endonuclease 2 family. It depends on Zn(2+) as a cofactor. Mn(2+) serves as cofactor. In terms of processing, may be proteolytically cleaved.

It is found in the mitochondrion. In terms of biological role, plays a role in mitochondrial DNA base excision repair (BER) pathway induced by oxidative stress. Has apurinic/apyrimidinic (AP) endonuclease activity towards double-stranded DNA (dsDNA) with a preference for C as opposite base. Has 3'-phosphatase activity; removes 3'-phosphate from blunt-end, recessed, and gapped DNA templates and thus, removes 3'-blocks for DNA polymerase activity during BER. Lacks 3'-5' exonuclease activity and does not cleave damaged bases by nucleotide incision repair (NIR). This Plasmodium berghei (strain Anka) protein is Apurinic-apyrimidinic endonuclease 1.